The chain runs to 701 residues: Elongation factor G (701 aa).

Residues 8-291 (GRYRNIGIVA…AVIDYLPAPT (284 aa)) form the tr-type G domain. Residues 17-24 (AHVDAGKT), 89-93 (DTPGH), and 143-146 (NKMD) contribute to the GTP site.

This sequence belongs to the TRAFAC class translation factor GTPase superfamily. Classic translation factor GTPase family. EF-G/EF-2 subfamily.

It is found in the cytoplasm. In terms of biological role, catalyzes the GTP-dependent ribosomal translocation step during translation elongation. During this step, the ribosome changes from the pre-translocational (PRE) to the post-translocational (POST) state as the newly formed A-site-bound peptidyl-tRNA and P-site-bound deacylated tRNA move to the P and E sites, respectively. Catalyzes the coordinated movement of the two tRNA molecules, the mRNA and conformational changes in the ribosome. This chain is Elongation factor G, found in Pseudomonas syringae pv. syringae (strain B728a).